Reading from the N-terminus, the 198-residue chain is uncharacterized protein (198 aa).

The 61-residue stretch at 11–71 (EGTHKAILSA…DSFLSTATDR (61 aa)) folds into the HTH tetR-type domain. Residues 34–53 (TVDKIAERAKVSKATIYKWW) constitute a DNA-binding region (H-T-H motif).

This is an uncharacterized protein from Bacillus subtilis (strain 168).